Here is a 218-residue protein sequence, read N- to C-terminus: Small ribosomal subunit protein uS3c (218 aa).

In terms of domain architecture, KH type-2 spans 43–118 (IKNYVQKNMK…KLNISITRIE (76 aa)).

It belongs to the universal ribosomal protein uS3 family. Part of the 30S ribosomal subunit.

The protein resides in the plastid. Its subcellular location is the chloroplast. The protein is Small ribosomal subunit protein uS3c (rps3) of Populus alba (White poplar).